Reading from the N-terminus, the 168-residue chain is S-ribosylhomocysteine lyase (168 aa).

Fe cation-binding residues include His-54, His-58, and Cys-128.

Belongs to the LuxS family. Homodimer. The cofactor is Fe cation.

It catalyses the reaction S-(5-deoxy-D-ribos-5-yl)-L-homocysteine = (S)-4,5-dihydroxypentane-2,3-dione + L-homocysteine. In terms of biological role, involved in the synthesis of autoinducer 2 (AI-2) which is secreted by bacteria and is used to communicate both the cell density and the metabolic potential of the environment. The regulation of gene expression in response to changes in cell density is called quorum sensing. Catalyzes the transformation of S-ribosylhomocysteine (RHC) to homocysteine (HC) and 4,5-dihydroxy-2,3-pentadione (DPD). The sequence is that of S-ribosylhomocysteine lyase from Neisseria meningitidis serogroup C (strain 053442).